The sequence spans 231 residues: 2-C-methyl-D-erythritol 4-phosphate cytidylyltransferase (231 aa).

It belongs to the IspD/TarI cytidylyltransferase family. IspD subfamily.

It carries out the reaction 2-C-methyl-D-erythritol 4-phosphate + CTP + H(+) = 4-CDP-2-C-methyl-D-erythritol + diphosphate. It participates in isoprenoid biosynthesis; isopentenyl diphosphate biosynthesis via DXP pathway; isopentenyl diphosphate from 1-deoxy-D-xylulose 5-phosphate: step 2/6. Functionally, catalyzes the formation of 4-diphosphocytidyl-2-C-methyl-D-erythritol from CTP and 2-C-methyl-D-erythritol 4-phosphate (MEP). The protein is 2-C-methyl-D-erythritol 4-phosphate cytidylyltransferase of Shewanella pealeana (strain ATCC 700345 / ANG-SQ1).